The primary structure comprises 682 residues: Amphiphysin (682 aa).

2 coiled-coil regions span residues A10 to V84 and D144 to L191. The region spanning V24–D240 is the BAR domain. 4 disordered regions span residues T244–T310, I446–G470, G501–V530, and A561–M606. Pro residues predominate over residues P261–T274. Basic and acidic residues predominate over residues V503 to Q527. Residues T567–P596 show a composition bias toward polar residues. The region spanning G609 to E682 is the SH3 domain.

Heterodimer with BIN1. Binds SH3GLB1. Is abundant in the forebrain and cerebellum. It is also found in the adrenal gland, anterior and posterior pituitary.

It is found in the cytoplasmic vesicle. The protein localises to the secretory vesicle. The protein resides in the synaptic vesicle membrane. It localises to the cytoplasm. Its subcellular location is the cytoskeleton. Functionally, may participate in mechanisms of regulated exocytosis in synapses and certain endocrine cell types. May control the properties of the membrane associated cytoskeleton. The sequence is that of Amphiphysin (AMPH) from Gallus gallus (Chicken).